We begin with the raw amino-acid sequence, 551 residues long: Tetrachloroethene reductive dehalogenase (551 aa).

Positions 1–39 form a signal peptide, tat-type signal; it reads MGEINRRNFLKVSILGAAAAAVASASAVKGMVSPLVADA. The 4Fe-4S ferredoxin-type 1 domain maps to 411–440; that stretch reads PRKFGVREFCRLCKKCADACPAQAISHEKD. Positions 420, 423, 426, 430, 467, 478, 481, and 485 each coordinate [4Fe-4S] cluster. The 4Fe-4S ferredoxin-type 2 domain occupies 478-496; sequence CSNCVAVCSWNKVETWNHD.

This sequence belongs to the PceA family. [4Fe-4S] cluster serves as cofactor. Requires corrinoid as cofactor. Post-translationally, predicted to be exported by the Tat system. The position of the signal peptide cleavage has been experimentally proven.

Its subcellular location is the cytoplasm. The protein localises to the cell membrane. It is found in the secreted. The catalysed reaction is trichloroethene + chloride + A + H(+) = tetrachloroethene + AH2. It catalyses the reaction trichloroethene + AH2 = (Z)-1,2-dichloroethene + chloride + A + H(+). Its activity is regulated as follows. PceT is required as a chaperone for prePceA maturation. In the absence or presence of exogenous vitamin B12, the intracellular corrinoid level decreases in fumarate-grown cells and the PceA precursor forms catalytically inactive, corrinoid-free multiprotein aggregates. Exogenous vitamin B12 is not incorporated into the PceA precursor, even though it affects the transposition of the pce gene cluster. In terms of biological role, catalyzes the reductive dechlorination of tetrachloroethene (PCE) to trichloroethene (TCE) and of trichloroethene to cis-1,2-dichloroethene (DCE). Can also use various chlorinated ethanes such as tetrachloroethane, pentachloroethane and hexachloroethane. Reduced methyl viologen can act as the artificial electron donor. In Desulfitobacterium hafniense (strain Y51), this protein is Tetrachloroethene reductive dehalogenase.